The primary structure comprises 998 residues: MADRKANGGGASASSSGTNLLFSSSATEFSFNVPFIPVTQAAASPASLLLPGEDSTDVGEEDSFLGQTSTHTSTPQTFSYFSQVSSSSDPFGNIGQSPLTTSAMSAGQSALPKPPATLAFTTGSQDALSAFPPSVSKAPGATPPSQMGTSTYSPSQPSSLPPNFGSPPQGIPQQGHNPYRHTPVSSRANPYITPPQLQQCQMPGHSSYPPPSGPPVQTYQMPPGPLPPLPTAMQSPAQQQVPARPAGPLVQGPSPFVLQNQYEPVQPHWFYCKEVEYKQLWMPFSVLDSLNLEEIYNSVQPDPESVVLGTDGGRYDVYLYDRMRKSVYWEEEPTEVRRCTWFYKGDTDSRFIPYTEEFSEKLEAEYKKAVSTNQWHRRLEFPSGETIVMHNPKVIVQFQPSSVPDEWGTTQDGQTRPRVVKRGIDDSLDEIPDGEMPQVDHLVFMVHGIGPVCDLRFRSIIECVDDFRVVSLKLLQTHFKKSVDEGKVSRVEFLPVHWHSALGGHATGVDRNIKKITLPSIGRFRHFTNETLLDVLFYNSPTYCQAIVEKVEVEINRLHSLFMSRNPNFKGKVSVAGHSLGSLILFDILSNQRDMCVSKSPGSVAVSNGVIKHSQFQEKLISEESKLMSDESCDLDVEDEEPLTLHGTLEALSLFDYISTFEKEKIDMESLLMCTVDDLKEMGIPLGPRKKIANFVKLKAAKLEQKKAAAEKKAALAALTKGQDESAPKTKEMASPSSESNESKRKLSVGAYVSSVRVDYESFEVGTGQVSVAYSSLDFEPEIFFALGSPIGMLLTIRGVARIDEKYRLPTCKGFFNIYHPLDPVAYRLEPMIAPDLDLKAVLVPHHKGRKRLHLELKESLSRMGSDLKQGFISSLKSAWQTLNEFARAHTSTTQLQEELEKVANQIKEEEEKQVVEAKKKKESPELSKDEDYLGKVGMLNGGRRIDYVLQEKPIESFNEYLFALQSHLCYWGSEDTALLLLKEIYRTMNISPEQPQH.

The tract at residues 1–363 (MADRKANGGG…YTEEFSEKLE (363 aa)) is interaction with SEC23A. A disordered region spans residues 50-246 (LPGEDSTDVG…AQQQVPARPA (197 aa)). Residues 54–63 (DSTDVGEEDS) show a composition bias toward acidic residues. Positions 65–78 (LGQTSTHTSTPQTF) are enriched in polar residues. Residues 79–88 (SYFSQVSSSS) are compositionally biased toward low complexity. Composition is skewed to polar residues over residues 94-108 (IGQS…SAGQ), 143-158 (PPSQ…SQPS), and 232-241 (AMQSPAQQQV). Residue serine 600 is modified to Phosphoserine. An SAM domain is found at 640-703 (EEPLTLHGTL…NFVKLKAAKL (64 aa)). The segment at 720-742 (TKGQDESAPKTKEMASPSSESNE) is disordered. Positions 722–732 (GQDESAPKTKE) are enriched in basic and acidic residues. 3 positions are modified to phosphoserine: serine 735, serine 748, and serine 924. Residues 777 to 987 (LDFEPEIFFA…ALLLLKEIYR (211 aa)) enclose the DDHD domain.

It belongs to the PA-PLA1 family. In terms of assembly, interacts with SEC23A.

The protein localises to the cytoplasmic vesicle. The protein resides in the COPII-coated vesicle membrane. It localises to the endoplasmic reticulum. In terms of biological role, plays a role in the organization of endoplasmic reticulum exit sites. Specifically binds to phosphatidylinositol 3-phosphate (PI(3)P), phosphatidylinositol 4-phosphate (PI(4)P) and phosphatidylinositol 5-phosphate (PI(5)P). The sequence is that of SEC23-interacting protein (Sec23ip) from Mus musculus (Mouse).